The following is a 134-amino-acid chain: MSEKPLLSKDEKRLLKIKNRMSRKRVEFRRQEWFRYKKFNESWRKPRGKHSKLREHLGYRPPVVDAGYRSPAAVRGLHPSGFAEKLVYNVNDLKSINPDREGARIASSVGMRKRKEIEEEADNLGIHVFNRVVK.

Belongs to the eukaryotic ribosomal protein eL32 family.

The chain is Large ribosomal subunit protein eL32 (rpl32e) from Picrophilus torridus (strain ATCC 700027 / DSM 9790 / JCM 10055 / NBRC 100828 / KAW 2/3).